Consider the following 124-residue polypeptide: MASNPPQPQGPALTAHILNTMSGIPAAGVQVALFKLNESPTPSQQFIATTETNANGRVTSWNVDLSTVESGIYTFRFETGAYFDSLGVTSFYPYVEMAVRINKGQHYHIPLLLAPYGYTTYRGS.

His16, Arg57, and Tyr121 together coordinate substrate.

This sequence belongs to the transthyretin family. 5-hydroxyisourate hydrolase subfamily. As to quaternary structure, homotetramer.

It catalyses the reaction 5-hydroxyisourate + H2O = 5-hydroxy-2-oxo-4-ureido-2,5-dihydro-1H-imidazole-5-carboxylate + H(+). In terms of biological role, catalyzes the hydrolysis of 5-hydroxyisourate (HIU) to 2-oxo-4-hydroxy-4-carboxy-5-ureidoimidazoline (OHCU). This chain is Probable 5-hydroxyisourate hydrolase, found in Schizosaccharomyces pombe (strain 972 / ATCC 24843) (Fission yeast).